A 68-amino-acid chain; its full sequence is Large ribosomal subunit protein uL29 (68 aa).

This sequence belongs to the universal ribosomal protein uL29 family.

The polypeptide is Large ribosomal subunit protein uL29 (Albidiferax ferrireducens (strain ATCC BAA-621 / DSM 15236 / T118) (Rhodoferax ferrireducens)).